The chain runs to 53 residues: MKVVIFIFALLATICAAFAYVPLPNVPQPGRRPFPTFPGQGPFNPKIKWPQGY.

The first 19 residues, 1–19 (MKVVIFIFALLATICAAFA), serve as a signal peptide directing secretion.

The protein localises to the secreted. In terms of biological role, this peptide has bactericidal activity. The polypeptide is Abaecin (Apis mellifera (Honeybee)).